The sequence spans 643 residues: Extracellular metalloproteinase 4 (643 aa).

A signal peptide spans 1–18; that stretch reads MHGLMLAGLLALPLSVLG. Residues 19–254 constitute a propeptide that is removed on maturation; that stretch reads HPTESHSSGI…VHSVVDYVSA (236 aa). The span at 47–57 shows a compositional bias: basic and acidic residues; sequence TKSDAVPKQDG. The interval 47–73 is disordered; sequence TKSDAVPKQDGESFTTSSTGNDNSSSG. Low complexity predominate over residues 61 to 73; it reads TTSSTGNDNSSSG. N-linked (GlcNAc...) asparagine glycosylation is found at Asn271 and Asn420. Zn(2+) is bound at residue His437. Residue Glu438 is part of the active site. His441 contacts Zn(2+). N-linked (GlcNAc...) asparagine glycosylation is found at Asn603 and Asn629.

This sequence belongs to the peptidase M36 family. Zn(2+) serves as cofactor.

It is found in the secreted. In terms of biological role, secreted metalloproteinase probably acting as a virulence factor. The protein is Extracellular metalloproteinase 4 (MEP4) of Trichophyton rubrum (Athlete's foot fungus).